We begin with the raw amino-acid sequence, 273 residues long: Dermonecrotic toxin LapSicTox-alphaIB1ai (273 aa).

The active site involves His-5. Mg(2+)-binding residues include Glu-25 and Asp-27. Catalysis depends on His-41, which acts as the Nucleophile. 2 disulfide bridges follow: Cys-45–Cys-51 and Cys-47–Cys-190. Asp-85 provides a ligand contact to Mg(2+). N-linked (GlcNAc...) asparagine glycosylation is present at Asn-250.

This sequence belongs to the arthropod phospholipase D family. Class II subfamily. The cofactor is Mg(2+). As to expression, expressed by the venom gland.

Its subcellular location is the secreted. The catalysed reaction is an N-(acyl)-sphingosylphosphocholine = an N-(acyl)-sphingosyl-1,3-cyclic phosphate + choline. It catalyses the reaction an N-(acyl)-sphingosylphosphoethanolamine = an N-(acyl)-sphingosyl-1,3-cyclic phosphate + ethanolamine. The enzyme catalyses a 1-acyl-sn-glycero-3-phosphocholine = a 1-acyl-sn-glycero-2,3-cyclic phosphate + choline. It carries out the reaction a 1-acyl-sn-glycero-3-phosphoethanolamine = a 1-acyl-sn-glycero-2,3-cyclic phosphate + ethanolamine. Functionally, dermonecrotic toxins cleave the phosphodiester linkage between the phosphate and headgroup of certain phospholipids (sphingolipid and lysolipid substrates), forming an alcohol (often choline) and a cyclic phosphate. This toxin acts on sphingomyelin (SM). It may also act on ceramide phosphoethanolamine (CPE), lysophosphatidylcholine (LPC) and lysophosphatidylethanolamine (LPE), but not on lysophosphatidylserine (LPS), and lysophosphatidylglycerol (LPG). It acts by transphosphatidylation, releasing exclusively cyclic phosphate products as second products. Induces dermonecrosis, hemolysis, increased vascular permeability, edema, inflammatory response, and platelet aggregation. The protein is Dermonecrotic toxin LapSicTox-alphaIB1ai of Loxosceles apachea (Apache recluse spider).